The sequence spans 243 residues: MAASSISSPWGKHVFKAILMVLVALILLHSALAQSRRDFAPPGQQKREAPVDVLTQIGRSVRGTLDAWIGPETMHLVSESSSQVLWAISSAISVAFFALSGIAAQLLNALGLAGDYLAQGLKLSPGQVQTFLLWGAGALVVYWLLSLLLGLVLALLGRILWGLKLVIFLAGFVALMRSVPDPSTRALLLLALLILYALLSRLTGSRASGAQLEAKVRGLERQVEELRWRQRRAAKGARSVEEE.

An N-terminal signal peptide occupies residues 1–33; that stretch reads MAASSISSPWGKHVFKAILMVLVALILLHSALA. At 34–83 the chain is on the lumenal side; the sequence is QSRRDFAPPGQQKREAPVDVLTQIGRSVRGTLDAWIGPETMHLVSESSSQ. A helical membrane pass occupies residues 84-104; the sequence is VLWAISSAISVAFFALSGIAA. Residues 105–135 are Cytoplasmic-facing; the sequence is QLLNALGLAGDYLAQGLKLSPGQVQTFLLWG. The helical transmembrane segment at 136–156 threads the bilayer; that stretch reads AGALVVYWLLSLLLGLVLALL. Residues 157-185 are Lumenal-facing; sequence GRILWGLKLVIFLAGFVALMRSVPDPSTR. Residues 186–205 traverse the membrane as a helical segment; the sequence is ALLLLALLILYALLSRLTGS. Topologically, residues 206 to 243 are cytoplasmic; that stretch reads RASGAQLEAKVRGLERQVEELRWRQRRAAKGARSVEEE.

In terms of assembly, homooligomer. Interacts with CRYAB; in the cellular response to DNA damage.

The protein resides in the nucleus outer membrane. Its subcellular location is the endoplasmic reticulum membrane. The protein localises to the sarcoplasmic reticulum membrane. The catalysed reaction is K(+)(in) = K(+)(out). It catalyses the reaction Ca(2+)(in) = Ca(2+)(out). Its function is as follows. Functions as a voltage-gated monoatomic cation channel permeable to both potassium and calcium. Plays a role in the cellular response to DNA damage. This Homo sapiens (Human) protein is Voltage-gated monoatomic cation channel TMEM109.